A 766-amino-acid chain; its full sequence is Probable beta-glucosidase K (766 aa).

The N-linked (GlcNAc...) asparagine glycan is linked to asparagine 19. The active site involves aspartate 196. N-linked (GlcNAc...) asparagine glycans are attached at residues asparagine 288, asparagine 453, and asparagine 748. Residues glutamate 369–valine 528 form the PA14 domain. Residues leucine 726 to arginine 766 form a disordered region. The segment covering arginine 742–glutamine 756 has biased composition (polar residues).

Belongs to the glycosyl hydrolase 3 family.

The protein localises to the secreted. It carries out the reaction Hydrolysis of terminal, non-reducing beta-D-glucosyl residues with release of beta-D-glucose.. It functions in the pathway glycan metabolism; cellulose degradation. Its function is as follows. Beta-glucosidases are one of a number of cellulolytic enzymes involved in the degradation of cellulosic biomass. Catalyzes the last step releasing glucose from the inhibitory cellobiose. This Aspergillus fumigatus (strain CBS 144.89 / FGSC A1163 / CEA10) (Neosartorya fumigata) protein is Probable beta-glucosidase K (bglK).